The sequence spans 71 residues: Cell division protein ZapB (71 aa).

A coiled-coil region spans residues 5–67 (LEVLEQLESK…RALLGKMEQM (63 aa)).

It belongs to the ZapB family. In terms of assembly, homodimer. The ends of the coiled-coil dimer bind to each other, forming polymers. Interacts with FtsZ.

It is found in the cytoplasm. In terms of biological role, non-essential, abundant cell division factor that is required for proper Z-ring formation. It is recruited early to the divisome by direct interaction with FtsZ, stimulating Z-ring assembly and thereby promoting cell division earlier in the cell cycle. Its recruitment to the Z-ring requires functional FtsA or ZipA. This Aeromonas salmonicida (strain A449) protein is Cell division protein ZapB.